Consider the following 341-residue polypeptide: Eukaryotic translation initiation factor 3 subunit I (341 aa).

WD repeat units follow at residues glycine 8–histidine 49, glycine 50–glutamate 91, cysteine 145–serine 184, aspartate 189–threonine 228, and glycine 286–methionine 325.

Belongs to the eIF-3 subunit I family. As to quaternary structure, component of the eukaryotic translation initiation factor 3 (eIF-3) complex.

It localises to the cytoplasm. Component of the eukaryotic translation initiation factor 3 (eIF-3) complex, which is involved in protein synthesis of a specialized repertoire of mRNAs and, together with other initiation factors, stimulates binding of mRNA and methionyl-tRNAi to the 40S ribosome. The eIF-3 complex specifically targets and initiates translation of a subset of mRNAs involved in cell proliferation. The polypeptide is Eukaryotic translation initiation factor 3 subunit I (Pyricularia oryzae (strain 70-15 / ATCC MYA-4617 / FGSC 8958) (Rice blast fungus)).